A 263-amino-acid polypeptide reads, in one-letter code: Protein M1425_2021 (263 aa).

Belongs to the CinA family.

This chain is Protein M1425_2021, found in Saccharolobus islandicus (strain M.14.25 / Kamchatka #1) (Sulfolobus islandicus).